The chain runs to 994 residues: Myosin IA heavy chain (994 aa).

The Myosin motor domain maps to 12-720 (VGVEDLIMLT…PLFLLEDKRN (709 aa)). 105–112 (GESGAGKT) contacts ATP. An actin-binding region spans residues 574 to 654 (TFIPTDKKRP…RAGYCYRQTF (81 aa)). IQ domains follow at residues 723 to 744 (LNDLATKIGSVWKMYKQRKWYL) and 745 to 774 (RTLAAIKIQRTYRGWLLVRECVKLKNQSIS). In terms of domain architecture, TH1 spans 782–970 (RNRQSIKLSK…ANSPSFTAKA (189 aa)).

This sequence belongs to the TRAFAC class myosin-kinesin ATPase superfamily. Myosin family. In terms of assembly, myosin I heavy chain is single-headed. Dimer of a heavy and a light chain. Inability to self-assemble into filaments.

Actin-based motor protein, possibly involved in a wide range of motile processes, such as cell movement across a surface, and extension and retraction of pseudopodia or lamellipodia. This chain is Myosin IA heavy chain (myoA), found in Dictyostelium discoideum (Social amoeba).